A 508-amino-acid chain; its full sequence is Phenylacetaldehyde synthase (508 aa).

L-phenylalanine-binding residues include His203 and His318. N6-(pyridoxal phosphate)lysine is present on Lys319. Phe348 is an L-phenylalanine binding site.

It belongs to the group II decarboxylase family. In terms of assembly, homotetramer. It depends on pyridoxal 5'-phosphate as a cofactor.

It catalyses the reaction L-phenylalanine + O2 + H2O + H(+) = 2-phenylacetaldehyde + H2O2 + NH4(+) + CO2. Bifunctional enzyme that catalyzes the decarboxylation of L-phenylalanine to produce 2-phenylethylamine, which is then oxidized to form 2-phenylacetaldehyde, a constituent of floral scent in petals. 2-phenylacetaldehyde is a precursor of 2-phenylethanol, another constituent of floral scent in petals. This Rosa hybrid cultivar protein is Phenylacetaldehyde synthase.